A 307-amino-acid polypeptide reads, in one-letter code: UDP-3-O-acyl-N-acetylglucosamine deacetylase (307 aa).

Positions 78, 235, and 239 each coordinate Zn(2+). The active-site Proton donor is His262.

The protein belongs to the LpxC family. The cofactor is Zn(2+).

It carries out the reaction a UDP-3-O-[(3R)-3-hydroxyacyl]-N-acetyl-alpha-D-glucosamine + H2O = a UDP-3-O-[(3R)-3-hydroxyacyl]-alpha-D-glucosamine + acetate. It participates in glycolipid biosynthesis; lipid IV(A) biosynthesis; lipid IV(A) from (3R)-3-hydroxytetradecanoyl-[acyl-carrier-protein] and UDP-N-acetyl-alpha-D-glucosamine: step 2/6. In terms of biological role, catalyzes the hydrolysis of UDP-3-O-myristoyl-N-acetylglucosamine to form UDP-3-O-myristoylglucosamine and acetate, the committed step in lipid A biosynthesis. The protein is UDP-3-O-acyl-N-acetylglucosamine deacetylase of Geotalea uraniireducens (strain Rf4) (Geobacter uraniireducens).